A 2497-amino-acid polypeptide reads, in one-letter code: MMLNKIKRSKAGSIEDSKLQALPLGTRRKIGQTTGESDNNNNNSNDQSLKKFKNDNTEENNSIGVNNNTSTNININTNTNINTNNSTNTNNINNTNNNNNNNNNNNNNNNNNNNNNNNNSNNNNNNNISNGGNNINNNNNNNNNGNNNNNINNSNGIRRVFDQNYYIDLVESEEDIEIKIRIIKSMLMVLKSSVGNEPDKCAFISLLVICKRSPTLFSHFDLLEPLLSLLKKDPTHVQKKNNLLSILACNLLMAGYDHIQDWPVYLFCAYLDDAIGDRYWVEDQYCKTFVNNIITAFPQQPQPPQQQQTKQPVNIKTQPQQQQQQQQQPQPQQIKKSDDDIVEEIDNLLSVSSSSQPQPQQQKNRFSHCLNDIIKYIIHMIRQYIQSPNQRVFIKLLSLTVGFKESRLEGSQIIEQLLGNTNVFRFAKEYLTQLLAATTESTVEDIKTVQNLLKIQVSHHIDIISTLLVNNPIYPAIALHQAIEIELDTNQKVATKSKLSIIFKFLPNNRGEEELAMILKDFCSRDDSIRSPVKIIVKKILKNLTFISLFYLCEQLSTITQKDEQFYLLLQSSQQQQQQQPPPSTITITRERWALNIIHMLTQILFLIPSMNEHLKDQSNMRSMISTIQSSSVSWCFKLLNLGVLSYGDALSLIGKVLIFEPLNSFFQAPNLAVDSDRNAYRMLTTEIPIQENILDILLTIGFEYPSEKKIVLELCEALLKRAISIVHKFNVLVPLTKVTFAESILSLSRIENTSEPQLAYTSLFWQSTILACLLICLSPSIIGSYYWNNCPTIRILIEMIITRSWKFPPYLPKAVANNPSYFQLIEQNQRIEEKKLLSRIPQLTSIDFMILDSIKGTNGVIRQPPEEIIEKLQKLDNDFHLGFILCNCRSPDFLLDIMSNQDSKQSMMWLNPIIHNDPKTLDILPPICLSEILLSTQFEQQQQQQQQQQQLQTPQQQQQQQQPTNPIAPRVLNRMSLFFNSPSPVPTLEILNFFFTLLCSDNPIIRILSKKSLSLLVLPIKSTLSTTTTTTSSTTTTTTTTTSTTTSTSTSSSSSSLNPTQPSLRSSCDKIKTSGLSGSSNGINQSSDSITAVAGSTSPTTTTTSSSSTCQTYITEEFQWLLKLNNLAWFEESQEIVISALKKAINVETDVSSIRSYIQYLVVNQSTPFDASFQMDLSQLILNRGIIANYLLSSDISILIFNAYLNILEPLNQKDLSKKLLLLSSSTNSINNINNNDNNNNNNNNNNNNNNNNNNNNNDNNINKNNDDNNHSNSMANNNLPNNNNKNNQKSKKWVKIIKNSNNKNNDDNSMEDDNNEDIIYLPRIVLDSIIYCISSSLNVNDIDQIQSIVAILFPTTTTTAIDQDKTFEIKNKFLDFDNQTDEEPILKSKQLVEVSLKSSIPQLISIALQRNTSVGLFNGLNDYIEQLILKGIEMSFLSRSMILEIIDKNIDKIKSSFENNSSNNDNNESKEIKEILNQIIENNEKQTILKLFIKESSKHGQLFLNFIESLISAKSGDSKQITKKKQKSSFNLFNEFLETDEINNQEIEEGSMELDINFENSIKHQILNINNNNNNNNNNNNNNNNNNNNNNNNNNNNNNNITQLLEGNGQIDSFVKAINSFEVSKSISSDININIPFSISTIRILKNTTQQKQQKQQQKESVQKSIQSLSKLILSSKNIKNYQKRFIDHILKKKSNLELIESAQNLTLENGINKEFDICKEWEIYSSGSGSSSNEINDQFKGTEIIRKLVNKQHFSIIIVSDPLKLGEIFKSLVKQFILNDQLRLEEFIGGFFTKVYSNSLSQSSTITIVLFNSLVSLLTDFGSNIQMKQSLGILLDWTGLLVQQFLLKNNNNNNNNNNNGISLNIKQFYFLLFGKGSFKFSTLLHSHFIHNSTWRNLKIMMQWLFKVNNNYNDDDDDNDDGDRPIIDATLVLNFINAYHQHPRSGAPYYSASNTATTASSKSITNMSTIMDSMVMHYLNPSTIRTLSDYIIEEIDQVKGGPSNYPQSKLRNRMNLLISSSMISKENLISLVLHLSNQYTKSTSSSIVIKQIYFAFPSTLKSILTNFSPCLIVSSPNNLLSQQQQQQQQQQQQQQKQQSNNSNNINNNNNNNNSEKKQKSKEQNIILTTNDLIVNNQSIPSTQLDIILHRVILKISDMSTIENRNSGFIIVRKLAILHPELITLHLPSFYSLLSGRADTPLTLFLSRNYHHLFYQILDLLDILRPIVFNSQSLLPILQEYFTLFSNNCNQRINDFIPIVSKLCDFLLPFTGNYQNLDILIQNKDTIKSLSIFYPNAEPLLLRIKPNQISSLSSSYYLSSLLSINNNNNNNNNNNNNNNNNNNNNNNNNNNPLELIKFKLYDNGYNNNNNDKLVKQLEDVIKITQNLPSYLHCIKDELLRLIQSDYQNIRAISYFLIQRYLQYCPQDAESMMDKYLSCFQHWNPDVVKDAIQHSSDFYCLSNDRSEYLIEQILIYGGKDSINDIKKLINPFSRIFY.

Residues 1–10 (MMLNKIKRSK) show a composition bias toward basic residues. Disordered regions lie at residues 1–151 (MMLN…NNNI), 300–337 (QPQP…IKKS), 946–965 (QQQQ…QQPT), 1028–1108 (TTTT…TSSS), 1234–1292 (INNN…NQKS), and 1572–1604 (NNNN…NNIT). 5 stretches are compositionally biased toward low complexity: residues 37–46 (SDNNNNNSND), 60–151 (NNSI…NNNI), 305–333 (QQQQ…QPQQ), 946–963 (QQQQ…QQQQ), and 1028–1058 (TTTT…SSSL). Residues 1075–1091 (SGLSGSSNGINQSSDSI) show a composition bias toward polar residues. Low complexity-rich tracts occupy residues 1097 to 1108 (STSPTTTTTSSS), 1234 to 1265 (INNN…NINK), 1272 to 1289 (HSNS…NKNN), and 1572 to 1602 (NNNN…NNNN). The stretch at 1645-1675 (RILKNTTQQKQQKQQQKESVQKSIQSLSKLI) forms a coiled coil. Residues 2084 to 2115 (QQQQQQQQQQQQQQKQQSNNSNNINNNNNNNN) show a composition bias toward low complexity. 2 disordered regions span residues 2084 to 2123 (QQQQ…QKSK) and 2329 to 2350 (NNNN…NNNN).

The protein belongs to the Integrator subunit 1 family. Component of the Integrator complex. The core complex associates with protein phosphatase 2A subunits to form the Integrator-PP2A (INTAC) complex.

It localises to the nucleus. In terms of biological role, component of the integrator complex, a multiprotein complex that terminates RNA polymerase II (Pol II) transcription in the promoter-proximal region of genes. The integrator complex provides a quality checkpoint during transcription elongation by driving premature transcription termination of transcripts that are unfavorably configured for transcriptional elongation: the complex terminates transcription by (1) catalyzing dephosphorylation of the C-terminal domain (CTD) of Pol II subunit polr2a, (2) degrading the exiting nascent RNA transcript via endonuclease activity and (3) promoting the release of Pol II from bound DNA. The integrator complex is also involved in terminating the synthesis of non-coding Pol II transcripts, such as enhancer RNAs (eRNAs), small nuclear RNAs (snRNAs), telomerase RNAs and long non-coding RNAs (lncRNAs). The protein is Integrator complex subunit 1 homolog (ints1) of Dictyostelium discoideum (Social amoeba).